The chain runs to 174 residues: Protein C2-DOMAIN ABA-RELATED 2 (174 aa).

Position 1 is an N-acetylmethionine (Met1). In terms of domain architecture, C2 spans Met1 to Gly104. 7 residues coordinate Ca(2+): Arg21, Asp22, Asp27, Asp73, Arg74, Asp75, and Asp81.

It belongs to the plant CAR protein family. As to quaternary structure, binds to PYR/PYL/RCAR abscisic acid intracellular receptors in an ABA-independent manner, both at the plasma membrane and in the nucleus. The cofactor is Ca(2+).

It is found in the cell membrane. The protein resides in the nucleus. Its function is as follows. Stimulates the GTPase/ATPase activities of Obg-like ATPases. Mediates the transient calcium-dependent interaction of PYR/PYL/RCAR abscisic acid (ABA) receptors with the plasma membrane and thus regulates ABA sensitivity. The chain is Protein C2-DOMAIN ABA-RELATED 2 from Arabidopsis thaliana (Mouse-ear cress).